Here is a 386-residue protein sequence, read N- to C-terminus: 2,3-diketo-5-methylthiopentyl-1-phosphate enolase (386 aa).

Lys-85 functions as the Proton acceptor in the catalytic mechanism. Residues Lys-131, Lys-157–Glu-160, His-248, Gly-316, and Gly-338–Thr-339 contribute to the substrate site. Mg(2+)-binding residues include Lys-157, Asp-159, and Glu-160. N6-carboxylysine is present on Lys-157.

This sequence belongs to the RuBisCO large chain family. Type IV subfamily. As to quaternary structure, homodimer. It depends on Mg(2+) as a cofactor.

It catalyses the reaction 5-methylsulfanyl-2,3-dioxopentyl phosphate = 2-hydroxy-5-methylsulfanyl-3-oxopent-1-enyl phosphate. The protein operates within amino-acid biosynthesis; L-methionine biosynthesis via salvage pathway; L-methionine from S-methyl-5-thio-alpha-D-ribose 1-phosphate: step 3/6. Functionally, catalyzes the enolization of 2,3-diketo-5-methylthiopentyl-1-phosphate (DK-MTP-1-P) into 2-hydroxy-3-keto-5-methylthiopentenyl-1-phosphate (HK-MTPenyl-1-P). The polypeptide is 2,3-diketo-5-methylthiopentyl-1-phosphate enolase (mtnW) (Microcystis aeruginosa).